Here is a 294-residue protein sequence, read N- to C-terminus: Bifunctional protein FolD (294 aa).

Residues 171–173 (GRS), serine 196, and isoleucine 237 each bind NADP(+).

Belongs to the tetrahydrofolate dehydrogenase/cyclohydrolase family. In terms of assembly, homodimer.

The catalysed reaction is (6R)-5,10-methylene-5,6,7,8-tetrahydrofolate + NADP(+) = (6R)-5,10-methenyltetrahydrofolate + NADPH. It carries out the reaction (6R)-5,10-methenyltetrahydrofolate + H2O = (6R)-10-formyltetrahydrofolate + H(+). It functions in the pathway one-carbon metabolism; tetrahydrofolate interconversion. Catalyzes the oxidation of 5,10-methylenetetrahydrofolate to 5,10-methenyltetrahydrofolate and then the hydrolysis of 5,10-methenyltetrahydrofolate to 10-formyltetrahydrofolate. In Synechocystis sp. (strain ATCC 27184 / PCC 6803 / Kazusa), this protein is Bifunctional protein FolD.